We begin with the raw amino-acid sequence, 69 residues long: Probable rubredoxin HupI (69 aa).

Positions 16–67 constitute a Rubredoxin-like domain; sequence VTRLECGICWTVYDPADGDDVAQIAPGTPFAALPEEWHCPNCDAPKSKFMAI. Cys21, Cys24, Cys54, and Cys57 together coordinate Fe cation.

It belongs to the rubredoxin family. Requires Fe(3+) as cofactor.

In terms of biological role, could be an electron transport intermediate in hydrogen oxidation. This is Probable rubredoxin HupI (hupI) from Bradyrhizobium diazoefficiens (strain JCM 10833 / BCRC 13528 / IAM 13628 / NBRC 14792 / USDA 110).